The primary structure comprises 214 residues: Large ribosomal subunit protein uL1 (214 aa).

The protein belongs to the universal ribosomal protein uL1 family. Part of the 50S ribosomal subunit.

Its function is as follows. Binds directly to 23S rRNA. Probably involved in E site tRNA release. In terms of biological role, protein L1 is also a translational repressor protein, it controls the translation of its operon by binding to its mRNA. This is Large ribosomal subunit protein uL1 from Methanopyrus kandleri (strain AV19 / DSM 6324 / JCM 9639 / NBRC 100938).